The chain runs to 1088 residues: Receptor-type guanylate cyclase gcy-17 (1088 aa).

The N-terminal stretch at 1-20 is a signal peptide; it reads MLFLRLFIFTPFLILANCQA. Residues 21–480 lie on the Extracellular side of the membrane; sequence RRTIKVGLLF…PPDFVRDYLV (460 aa). 7 N-linked (GlcNAc...) asparagine glycosylation sites follow: Asn-33, Asn-235, Asn-251, Asn-321, Asn-381, Asn-419, and Asn-434. Residues 481–501 traverse the membrane as a helical segment; the sequence is IVIIIVMFLIFAVSAAVGAVF. The Cytoplasmic segment spans residues 502 to 1088; sequence YAIRQKRKEI…SMARSITPEI (587 aa). Residues 529-552 form a disordered region; the sequence is SKKSKSEASQRSFASGPSTSTKLT. Polar residues predominate over residues 535-552; it reads EASQRSFASGPSTSTKLT. The Protein kinase domain occupies 535–824; that stretch reads EASQRSFASG…KGNLMDHVFN (290 aa). Residues 826–854 are a coiled coil; it reads LETYASTLEEEVNERTKELVEEQKKSDVL. A Guanylate cyclase domain is found at 882–1012; it reads TIFFSDVVQF…DAVNTASRME (131 aa). The tract at residues 1069–1088 is disordered; sequence SNMRKRENTPSMARSITPEI.

The protein belongs to the adenylyl cyclase class-4/guanylyl cyclase family. In terms of tissue distribution, expressed in PHA sensory neurons.

Its subcellular location is the cell membrane. The catalysed reaction is GTP = 3',5'-cyclic GMP + diphosphate. Functionally, guanylate cyclase involved in the production of the second messenger cGMP. The sequence is that of Receptor-type guanylate cyclase gcy-17 from Caenorhabditis elegans.